Consider the following 310-residue polypeptide: Protein FAM153A (310 aa).

Disordered stretches follow at residues 39–58, 108–136, 156–184, and 250–297; these read LGVPQCERDEGSLGKPLCPP, QTNGDLEDLEEHGPGQTVSEEATEVHTME, SYNGEEEDPEEVKTSLGVPQRGDLEDLEE, and TITG…KKSR. Over residues 259–268 the composition is skewed to low complexity; that stretch reads SASPSSAPAE. The span at 270–282 shows a compositional bias: basic and acidic residues; sequence ATEKTKVEEEVKT. Basic residues predominate over residues 283-297; the sequence is RKPKKKTRKPSKKSR.

Belongs to the FAM153 family.

This is Protein FAM153A (FAM153A) from Homo sapiens (Human).